Reading from the N-terminus, the 247-residue chain is MADTTPNGPQGAGAVQFMMTNKLDTAMWLSRLFTVYCSALFVLPLLGLHEAASFYQRALLANALTSALRLHQRLPHFQLSRAFLAQALLEDSCHYLLYSLIFVNSYPVTMSIFPVLLFSLLHAATYTKKVLDAKGSNSLPLLRSFLDKLSTNQQNILKFIACNEIFLMPATVFMLFSGQGSLLQPFIYYRFLTLRYSSRRNPYCRNLFNELRIVVEHIIMKPSCPLFVRRLCLQSIAFISRLAPTVA.

Residue Ala2 is modified to N-acetylalanine. Topologically, residues 2–31 (ADTTPNGPQGAGAVQFMMTNKLDTAMWLSR) are lumenal. Residues 32-52 (LFTVYCSALFVLPLLGLHEAA) traverse the membrane as a helical segment. Over 53–100 (SFYQRALLANALTSALRLHQRLPHFQLSRAFLAQALLEDSCHYLLYSL) the chain is Cytoplasmic. Residues 101 to 121 (IFVNSYPVTMSIFPVLLFSLL) traverse the membrane as a helical segment. At 122–155 (HAATYTKKVLDAKGSNSLPLLRSFLDKLSTNQQN) the chain is on the lumenal side. A helical membrane pass occupies residues 156–176 (ILKFIACNEIFLMPATVFMLF). Residues 177-247 (SGQGSLLQPF…FISRLAPTVA (71 aa)) lie on the Cytoplasmic side of the membrane.

Belongs to the PER33/POM33 family. In terms of assembly, interacts with EIF2AK3. Interacts with RTN1, RTN2, RTN3, RTN4 and ARL6IP1. Interacts with RNF5. Interacts with RNF26. Interacts with PKD2.

The protein localises to the endoplasmic reticulum membrane. It localises to the melanosome. Its subcellular location is the nucleus envelope. Its function is as follows. Acts as a regulator of the tubular endoplasmic reticulum (ER) network by modulating intracellular calcium homeostasis. Mechanistically, stimulates PKD2 calcium-dependent activity. Suppresses the RTN3/4-induced formation of the ER tubules. Positively regulates PERK-mediated and IRE1-mediated unfolded protein response signaling. Plays an essential role in VEGF-mediated release of Ca(2+) from ER stores during angiogenesis. Also plays a role in the modulation of innate immune signaling through the cGAS-STING pathway by interacting with RNF26. Participates in lipid metabolism by acting as a downstream effector of the pyruvate kinase/PKM. Forms a complex with RNF5 to facilitate polyubiquitination and subsequent degradation of SCAP on the ER membrane. This Mus musculus (Mouse) protein is Transmembrane protein 33 (Tmem33).